A 396-amino-acid chain; its full sequence is Elongation factor Tu (396 aa).

Residues 10–206 (KPHVNVGTIG…ALDSYIPEPE (197 aa)) enclose the tr-type G domain. The segment at 19-26 (GHVDHGKT) is G1. 19 to 26 (GHVDHGKT) contributes to the GTP binding site. T26 lines the Mg(2+) pocket. The segment at 60 to 64 (GITIN) is G2. Residues 81–84 (DCPG) form a G3 region. Residues 81–85 (DCPGH) and 136–139 (NKCD) each bind GTP. The segment at 136–139 (NKCD) is G4. The tract at residues 174 to 176 (SAL) is G5.

This sequence belongs to the TRAFAC class translation factor GTPase superfamily. Classic translation factor GTPase family. EF-Tu/EF-1A subfamily. In terms of assembly, monomer.

It localises to the cytoplasm. It catalyses the reaction GTP + H2O = GDP + phosphate + H(+). Its function is as follows. GTP hydrolase that promotes the GTP-dependent binding of aminoacyl-tRNA to the A-site of ribosomes during protein biosynthesis. This is Elongation factor Tu from Acinetobacter baumannii (strain ATCC 17978 / DSM 105126 / CIP 53.77 / LMG 1025 / NCDC KC755 / 5377).